We begin with the raw amino-acid sequence, 478 residues long: Solute carrier family 49 member 4 (478 aa).

The interval 1–27 (MGSGWSSEEEERQPLLGPGLGPAPGAT) is disordered. Topologically, residues 1 to 51 (MGSGWSSEEEERQPLLGPGLGPAPGATRRGREAAAVLPAAGPSPGRVYGRR) are cytoplasmic. A Di-leucine motif; mediates lysosomal localization motif is present at residues 15 to 16 (LL). The helical transmembrane segment at 52–72 (WLVLLLFSLLAFAQGLVWNTW) threads the bilayer. Topologically, residues 73–89 (GPIQNSARQAYSFTGWD) are lumenal. Residues 90-110 (IALLVLWGPIGFLPCFAFMWL) form a helical membrane-spanning segment. The Cytoplasmic portion of the chain corresponds to 111–117 (LDKRGLR). Residues 118–138 (ITVLLTSFLMVLGTGLRCIPV) form a helical membrane-spanning segment. Topologically, residues 139–152 (SDLTLKKRLIHGGQ) are lumenal. Residues 153–173 (ILNGLAGPTVMNAAPFLSTTW) traverse the membrane as a helical segment. Over 174-184 (FSADERATATA) the chain is Cytoplasmic. The helical transmembrane segment at 185 to 205 (IASMLSYLGGACAFLVGPLVV) threads the bilayer. The Lumenal portion of the chain corresponds to 206–229 (PAPNGTAPLLTAESSRDHIKDRIE). N-linked (GlcNAc...) asparagine glycosylation is present at Asn209. Residues 230–250 (TVLYAEFGVVCLIFSATLAYF) form a helical membrane-spanning segment. The Cytoplasmic segment spans residues 251 to 281 (PPRPPLPPSVAAASQRLSYRRSFCRLLSNLR). A helical membrane pass occupies residues 282 to 302 (FLMIALAYAIPLGVFAGWSGV). Topologically, residues 303–314 (LDLILTPVHVSQ) are lumenal. The chain crosses the membrane as a helical span at residues 315 to 335 (VDAGWIGFWSIVGGCVVGIAM). Residues 336-347 (ARFADFIRGMLK) are Cytoplasmic-facing. The helical transmembrane segment at 348–368 (LILLLLFSGATLSSTWFTLTC) threads the bilayer. Over 369 to 384 (LNSVTHLPLTTVTLYA) the chain is Lumenal. The chain crosses the membrane as a helical span at residues 385–405 (SCILLGVFLNSSVPIFFELFV). Residues 406–414 (ETVYPVPEG) lie on the Cytoplasmic side of the membrane. The chain crosses the membrane as a helical span at residues 415–435 (ITCGVVTFLSNMFMGVLLFFV). The Lumenal segment spans residues 436 to 442 (TFYHTEL). A helical transmembrane segment spans residues 443 to 463 (SWFNWCLPGSCLLSLLLILCF). The Cytoplasmic segment spans residues 464–478 (RESYDRLYLDVVVSV).

This sequence belongs to the major facilitator superfamily. Post-translationally, cleaved in lysosomes by cathepsin L between Leu-214 and Ala-261, generating a N-glycosylated N-terminal and a non-glycosylated C-terminal fragment.

The protein resides in the lysosome membrane. The catalysed reaction is pyridoxine(out) + n H(+)(out) = pyridoxine(in) + n H(+)(in). In terms of biological role, mediates H(+)-dependent pyridoxine transport. The chain is Solute carrier family 49 member 4 (Slc49a4) from Rattus norvegicus (Rat).